A 248-amino-acid chain; its full sequence is Ribosomal RNA small subunit methyltransferase J (248 aa).

S-adenosyl-L-methionine is bound by residues Arg98 to Asp99, Glu114 to Arg115, Ser150 to Ser151, and Asp168.

The protein belongs to the methyltransferase superfamily. RsmJ family.

The protein localises to the cytoplasm. The enzyme catalyses guanosine(1516) in 16S rRNA + S-adenosyl-L-methionine = N(2)-methylguanosine(1516) in 16S rRNA + S-adenosyl-L-homocysteine + H(+). In terms of biological role, specifically methylates the guanosine in position 1516 of 16S rRNA. The protein is Ribosomal RNA small subunit methyltransferase J of Shewanella amazonensis (strain ATCC BAA-1098 / SB2B).